Here is a 440-residue protein sequence, read N- to C-terminus: Thymidine phosphorylase (440 aa).

This sequence belongs to the thymidine/pyrimidine-nucleoside phosphorylase family. In terms of assembly, homodimer.

It carries out the reaction thymidine + phosphate = 2-deoxy-alpha-D-ribose 1-phosphate + thymine. It participates in pyrimidine metabolism; dTMP biosynthesis via salvage pathway; dTMP from thymine: step 1/2. In terms of biological role, the enzymes which catalyze the reversible phosphorolysis of pyrimidine nucleosides are involved in the degradation of these compounds and in their utilization as carbon and energy sources, or in the rescue of pyrimidine bases for nucleotide synthesis. The chain is Thymidine phosphorylase from Salmonella dublin (strain CT_02021853).